A 396-amino-acid polypeptide reads, in one-letter code: 1-deoxy-D-xylulose 5-phosphate reductoisomerase (396 aa).

Residues T10, G11, S12, I13, and N123 each contribute to the NADPH site. Residue K124 participates in 1-deoxy-D-xylulose 5-phosphate binding. E125 serves as a coordination point for NADPH. D149 contributes to the Mn(2+) binding site. S150, E151, S185, and H208 together coordinate 1-deoxy-D-xylulose 5-phosphate. E151 provides a ligand contact to Mn(2+). G214 lines the NADPH pocket. S221, N226, K227, and E230 together coordinate 1-deoxy-D-xylulose 5-phosphate. A Mn(2+)-binding site is contributed by E230.

Belongs to the DXR family. The cofactor is Mg(2+). Mn(2+) is required as a cofactor.

It carries out the reaction 2-C-methyl-D-erythritol 4-phosphate + NADP(+) = 1-deoxy-D-xylulose 5-phosphate + NADPH + H(+). The protein operates within isoprenoid biosynthesis; isopentenyl diphosphate biosynthesis via DXP pathway; isopentenyl diphosphate from 1-deoxy-D-xylulose 5-phosphate: step 1/6. Functionally, catalyzes the NADPH-dependent rearrangement and reduction of 1-deoxy-D-xylulose-5-phosphate (DXP) to 2-C-methyl-D-erythritol 4-phosphate (MEP). This chain is 1-deoxy-D-xylulose 5-phosphate reductoisomerase, found in Shewanella sp. (strain MR-7).